A 660-amino-acid polypeptide reads, in one-letter code: Bifunctional polymyxin resistance protein ArnA (660 aa).

The segment at 1–304 (MKAVVFAYHD…TLGLVAGARL (304 aa)) is formyltransferase ArnAFT. His104 serves as the catalytic Proton donor; for formyltransferase activity. Residues Arg114 and 136-140 (VKRAD) each bind (6R)-10-formyltetrahydrofolate. The segment at 314 to 660 (RRTRVLILGV…QSVEPGDAEE (347 aa)) is dehydrogenase ArnADH. NAD(+) contacts are provided by residues Asp347 and 368–369 (DI). Residues Ala393, Tyr398, and 432–433 (TS) contribute to the UDP-alpha-D-glucuronate site. The active-site Proton acceptor; for decarboxylase activity is Glu434. UDP-alpha-D-glucuronate is bound by residues Arg460, Asn492, 526 to 535 (KLIDGGRQKR), and Tyr613. Catalysis depends on Arg619, which acts as the Proton donor; for decarboxylase activity.

This sequence in the N-terminal section; belongs to the Fmt family. UDP-L-Ara4N formyltransferase subfamily. It in the C-terminal section; belongs to the NAD(P)-dependent epimerase/dehydratase family. UDP-glucuronic acid decarboxylase subfamily. In terms of assembly, homohexamer, formed by a dimer of trimers.

It catalyses the reaction UDP-alpha-D-glucuronate + NAD(+) = UDP-beta-L-threo-pentopyranos-4-ulose + CO2 + NADH. It carries out the reaction UDP-4-amino-4-deoxy-beta-L-arabinose + (6R)-10-formyltetrahydrofolate = UDP-4-deoxy-4-formamido-beta-L-arabinose + (6S)-5,6,7,8-tetrahydrofolate + H(+). The protein operates within nucleotide-sugar biosynthesis; UDP-4-deoxy-4-formamido-beta-L-arabinose biosynthesis; UDP-4-deoxy-4-formamido-beta-L-arabinose from UDP-alpha-D-glucuronate: step 1/3. It participates in nucleotide-sugar biosynthesis; UDP-4-deoxy-4-formamido-beta-L-arabinose biosynthesis; UDP-4-deoxy-4-formamido-beta-L-arabinose from UDP-alpha-D-glucuronate: step 3/3. Its pathway is bacterial outer membrane biogenesis; lipopolysaccharide biosynthesis. In terms of biological role, bifunctional enzyme that catalyzes the oxidative decarboxylation of UDP-glucuronic acid (UDP-GlcUA) to UDP-4-keto-arabinose (UDP-Ara4O) and the addition of a formyl group to UDP-4-amino-4-deoxy-L-arabinose (UDP-L-Ara4N) to form UDP-L-4-formamido-arabinose (UDP-L-Ara4FN). The modified arabinose is attached to lipid A and is required for resistance to polymyxin and cationic antimicrobial peptides. The protein is Bifunctional polymyxin resistance protein ArnA of Erwinia tasmaniensis (strain DSM 17950 / CFBP 7177 / CIP 109463 / NCPPB 4357 / Et1/99).